Reading from the N-terminus, the 429-residue chain is Enolase (429 aa).

Residue Gln163 participates in (2R)-2-phosphoglycerate binding. Glu205 serves as the catalytic Proton donor. Asp242, Glu285, and Asp312 together coordinate Mg(2+). 4 residues coordinate (2R)-2-phosphoglycerate: Lys337, Arg366, Ser367, and Lys388. The active-site Proton acceptor is Lys337.

This sequence belongs to the enolase family. Mg(2+) serves as cofactor.

Its subcellular location is the cytoplasm. It localises to the secreted. The protein resides in the cell surface. It carries out the reaction (2R)-2-phosphoglycerate = phosphoenolpyruvate + H2O. It participates in carbohydrate degradation; glycolysis; pyruvate from D-glyceraldehyde 3-phosphate: step 4/5. Functionally, catalyzes the reversible conversion of 2-phosphoglycerate (2-PG) into phosphoenolpyruvate (PEP). It is essential for the degradation of carbohydrates via glycolysis. The polypeptide is Enolase (Azoarcus sp. (strain BH72)).